A 332-amino-acid polypeptide reads, in one-letter code: Transaldolase (332 aa).

K135 functions as the Schiff-base intermediate with substrate in the catalytic mechanism.

This sequence belongs to the transaldolase family. Type 1 subfamily. Homodimer.

The protein resides in the cytoplasm. The enzyme catalyses D-sedoheptulose 7-phosphate + D-glyceraldehyde 3-phosphate = D-erythrose 4-phosphate + beta-D-fructose 6-phosphate. The protein operates within carbohydrate degradation; pentose phosphate pathway; D-glyceraldehyde 3-phosphate and beta-D-fructose 6-phosphate from D-ribose 5-phosphate and D-xylulose 5-phosphate (non-oxidative stage): step 2/3. Its function is as follows. Transaldolase is important for the balance of metabolites in the pentose-phosphate pathway. The protein is Transaldolase of Prochlorococcus marinus (strain NATL2A).